The following is a 208-amino-acid chain: Small ribosomal subunit protein uS4 (208 aa).

The 67-residue stretch at 98–164 (SRLDNVVYRM…DRIKFALELA (67 aa)) folds into the S4 RNA-binding domain.

The protein belongs to the universal ribosomal protein uS4 family. Part of the 30S ribosomal subunit. Contacts protein S5. The interaction surface between S4 and S5 is involved in control of translational fidelity.

One of the primary rRNA binding proteins, it binds directly to 16S rRNA where it nucleates assembly of the body of the 30S subunit. Functionally, with S5 and S12 plays an important role in translational accuracy. The chain is Small ribosomal subunit protein uS4 from Nitrosococcus oceani (strain ATCC 19707 / BCRC 17464 / JCM 30415 / NCIMB 11848 / C-107).